Reading from the N-terminus, the 255-residue chain is Zinc import ATP-binding protein ZnuC (255 aa).

The ABC transporter domain maps to 5 to 220 (VALEHIAVAF…PDFIAMFGYR (216 aa)).

The protein belongs to the ABC transporter superfamily. Zinc importer (TC 3.A.1.15.5) family. In terms of assembly, the complex is composed of two ATP-binding proteins (ZnuC), two transmembrane proteins (ZnuB) and a solute-binding protein (ZnuA).

It is found in the cell inner membrane. It catalyses the reaction Zn(2+)(out) + ATP(in) + H2O(in) = Zn(2+)(in) + ADP(in) + phosphate(in) + H(+)(in). Its function is as follows. Part of the ABC transporter complex ZnuABC involved in zinc import. Responsible for energy coupling to the transport system. This is Zinc import ATP-binding protein ZnuC from Sodalis glossinidius (strain morsitans).